We begin with the raw amino-acid sequence, 100 residues long: Coiled-coil domain-containing protein 167 (100 aa).

Residues 14–81 adopt a coiled-coil conformation; it reads VASEIDRVEE…VLRGENRRNM (68 aa). The chain crosses the membrane as a helical span at residues 82–99; the sequence is MLSVALLAISALFYYTFI.

Its subcellular location is the membrane. The chain is Coiled-coil domain-containing protein 167 (ccdc167) from Danio rerio (Zebrafish).